The chain runs to 663 residues: Polyunsaturated fatty acid lipoxygenase ALOX15 (663 aa).

The region spanning 2–115 is the PLAT domain; it reads GLYRVRVSTG…ILSLPEGTGR (114 aa). The 548-residue stretch at 116–663 folds into the Lipoxygenase domain; sequence TVVDDPQGLF…PSLVENSVAI (548 aa). Fe cation-binding residues include His-361, His-366, His-541, His-545, and Ile-663.

It belongs to the lipoxygenase family. In terms of assembly, interacts with PEBP1; in response to IL13/interleukin-13, prevents the interaction of PEBP1 with RAF1 to activate the ERK signaling cascade. Requires Fe cation as cofactor. Detected in tracheal epithelium.

It localises to the cytoplasm. It is found in the cytosol. The protein localises to the cell membrane. The protein resides in the lipid droplet. The catalysed reaction is (5Z,8Z,11Z,14Z)-eicosatetraenoate + O2 = (12S)-hydroperoxy-(5Z,8Z,10E,14Z)-eicosatetraenoate. The enzyme catalyses (5Z,8Z,11Z,14Z)-eicosatetraenoate + O2 = (15S)-hydroperoxy-(5Z,8Z,11Z,13E)-eicosatetraenoate. It catalyses the reaction (9Z,12Z)-octadecadienoate + O2 = (13S)-hydroperoxy-(9Z,11E)-octadecadienoate. It carries out the reaction (5Z,8Z,11Z,14Z)-eicosatetraenoate + 2 O2 = (14R,15S)-dihydroperoxy-(5Z,8Z,10E,12E)-eicosatetraenoate. The catalysed reaction is (5Z,8Z,11Z,14Z)-eicosatetraenoate + 2 O2 = (8S,15S)-dihydroperoxy-(5Z,9E,11Z,13E)-eicosatetraenoate. The enzyme catalyses (14S,15R)-epoxy-(5Z,8Z,11Z)-eicosatrienoate + O2 = (8S)-hydroperoxy-(14S,15R)-epoxy-(5Z,9E,11Z)-eicosatrienoate. It catalyses the reaction (14S,15R)-epoxy-(5Z,8Z,11Z)-eicosatrienoate + O2 = (12S)-hydroperoxy-(14S,15R)-epoxy-(5Z,8Z,10E)-eicosatrienoate. It carries out the reaction (14R,15S)-epoxy-(5Z,8Z,11Z)-eicosatrienoate + O2 = (5S)-hydroperoxy-(14R,15S)-epoxy-(6E,8Z,11Z)-eicosatrienoate. The catalysed reaction is (14R,15S)-epoxy-(5Z,8Z,11Z)-eicosatrienoate + O2 = (12S)-hydroperoxy-(14R,15S)-epoxy-(5Z,8Z,10E)-eicosatrienoate. The enzyme catalyses (15R)-hydroperoxy-(5Z,8Z,11Z,13E)-eicosatetraenoate = 15-oxo-(5Z,8Z,11Z,13E)-eicosatetraenoate + H2O. It catalyses the reaction (15S)-hydroperoxy-(5Z,8Z,11Z,13E)-eicosatetraenoate = (14S,15S)-epoxy-(5Z,8Z,10E,12E)-eicosatetraenoate + H2O. It carries out the reaction (12S)-hydroperoxy-(5Z,8Z,10E,14Z)-eicosatetraenoate = (8S)-hydroxy-(11S,12S)-epoxy-(5Z,9E,14Z)-eicosatrienoate. The catalysed reaction is (4Z,7Z,10Z,13Z,16Z)-docosapentaenoate + O2 = 14-hydroperoxy-(4Z,7Z,10Z,12E,16Z)-docosapentaenoate. The enzyme catalyses (7Z,10Z,13Z,16Z,19Z)-docosapentaenoate + O2 = 14-hydroperoxy-(7Z,10Z,12E,16Z,19Z)-docosapentaenoate. It catalyses the reaction (4Z,7Z,10Z,13Z,16Z,19Z)-docosahexaenoate + O2 = (14S)-hydroperoxy-(4Z,7Z,10Z,12E,16Z,19Z)-docosahexaenoate. It carries out the reaction (4Z,7Z,10Z,13Z,16Z,19Z)-docosahexaenoate + O2 = (17S)-hydroperoxy-(4Z,7Z,10Z,13Z,15E,19Z)-docosahexaenoate. The catalysed reaction is (7S)-hydroperoxy-(4Z,8E,10Z,13Z,16Z,19Z)-docosahexaenoate + O2 = (7S,14S)-dihydroperoxy-(4Z,8E,10Z,12E,16Z,19Z)-docosahexaenoate. The enzyme catalyses (7S)-hydroperoxy-(4Z,8E,10Z,13Z,16Z,19Z)-docosahexaenoate + O2 = (7S,17S)-dihydroperoxy-(4Z,8E,10Z,13Z,15E,19Z)-docosahexaenoate. It catalyses the reaction (4Z,7Z,10Z,13Z,16Z,19Z)-docosahexaenoate + O2 = (11S)-hydroperoxy-(4Z,7Z,9E,13Z,16Z,19Z)-docosahexaenoate. It carries out the reaction N-(5Z,8Z,11Z,14Z)-eicosatetraenoyl-taurine + O2 = N-(12S)-hydroperoxy-(5Z,8Z,10E,14Z)-eicosatetraenoyl-taurine. The catalysed reaction is N-(5Z,8Z,11Z,14Z)-eicosatetraenoyl-gamma-aminobutanoate + O2 = N-(12S)-hydroperoxy-(5Z,8Z,10E,14Z)-eicosatetraenoyl-gamma-aminobutanoate. The enzyme catalyses N-(5Z,8Z,11Z,14Z)-eicosatetraenoyl-glycine + O2 = N-(12S)-hydroperoxy-(5Z,8Z,10E,14Z)-eicosatetraenoyl-glycine. It catalyses the reaction N-(5Z,8Z,11Z,14Z)-eicosatetraenoyl-L-alanine + O2 = N-(12S)-hydroperoxy-(5Z,8Z,10E,14Z)-eicosatetraenoyl-alanine. It carries out the reaction N-(5Z,8Z,11Z,14Z)-eicosatetraenoyl-taurine + O2 = N-(15S)-hydroperoxy-(5Z,8Z,11Z,13E)-eicosatetraenoyl-taurine. The catalysed reaction is N-(5Z,8Z,11Z,14Z)-eicosatetraenoyl-gamma-aminobutanoate + O2 = N-(15S)-hydroperoxy-(5Z,8Z,11Z,13E)-eicosatetraenoyl-gamma-aminobutanoate. The enzyme catalyses N-(5Z,8Z,11Z,14Z)-eicosatetraenoyl-glycine + O2 = N-(15S)-hydroperoxy-(5Z,8Z,11Z,13E)-eicosatetraenoyl-glycine. It catalyses the reaction N-(5Z,8Z,11Z,14Z)-eicosatetraenoyl-L-alanine + O2 = N-(15S)-hydroperoxy-(5Z,8Z,11Z,13E)-eicosatetraenoyl-alanine. It participates in lipid metabolism; hydroperoxy eicosatetraenoic acid biosynthesis. Its function is as follows. Non-heme iron-containing dioxygenase that catalyzes the stereo-specific peroxidation of free and esterified polyunsaturated fatty acids generating a spectrum of bioactive lipid mediators. It inserts peroxyl groups at C12 or C15 of arachidonate ((5Z,8Z,11Z,14Z)-eicosatetraenoate) producing both 12-hydroperoxyeicosatetraenoate/12-HPETE and 15-hydroperoxyeicosatetraenoate/15-HPETE. It may then act on 12-HPETE to produce hepoxilins, which may show pro-inflammatory properties. Can also peroxidize linoleate ((9Z,12Z)-octadecadienoate) to 13-hydroperoxyoctadecadienoate. May participate in the sequential oxidations of DHA ((4Z,7Z,10Z,13Z,16Z,19Z)-docosahexaenoate) to generate specialized pro-resolving mediators (SPMs)like resolvin D5 ((7S,17S)-diHPDHA) and (7S,14S)-diHPDHA, that actively down-regulate the immune response and have anti-aggregation properties with platelets. Can convert epoxy fatty acids to hydroperoxy-epoxides derivatives followed by an intramolecular nucleophilic substitution leading to the formation of monocyclic endoperoxides. Plays an important role during the maintenance of self-tolerance by peroxidizing membrane-bound phosphatidylethanolamine which can then signal the sorting process for clearance of apoptotic cells during inflammation and prevent an autoimmune response. In addition to its role in the immune and inflammatory responses, this enzyme may play a role in epithelial wound healing in the cornea through production of lipoxin A4 (LXA(4)) and docosahexaenoic acid-derived neuroprotectin D1 (NPD1; 10R,17S-HDHA), both lipid autacoids exhibit anti-inflammatory and neuroprotective properties. Furthermore, it may regulate actin polymerization which is crucial for several biological processes such as the phagocytosis of apoptotic cells. It is also implicated in the generation of endogenous ligands for peroxisome proliferator activated receptor (PPAR-gamma), hence modulating macrophage development and function. It may also exert a negative effect on skeletal development by regulating bone mass through this pathway. As well as participates in ER stress and downstream inflammation in adipocytes, pancreatic islets, and liver. Finally, it is also involved in the cellular response to IL13/interleukin-13. This is Polyunsaturated fatty acid lipoxygenase ALOX15 from Bos taurus (Bovine).